The sequence spans 277 residues: Large ribosomal subunit protein uL2 (277 aa).

Disordered stretches follow at residues 32 to 58 and 225 to 277; these read KSLT…RGGG and VAMN…RRNK. Residues 258–277 show a composition bias toward basic residues; sequence YKTRKKKRYSDKFIIKRRNK.

This sequence belongs to the universal ribosomal protein uL2 family. In terms of assembly, part of the 50S ribosomal subunit. Forms a bridge to the 30S subunit in the 70S ribosome.

Its function is as follows. One of the primary rRNA binding proteins. Required for association of the 30S and 50S subunits to form the 70S ribosome, for tRNA binding and peptide bond formation. It has been suggested to have peptidyltransferase activity; this is somewhat controversial. Makes several contacts with the 16S rRNA in the 70S ribosome. The sequence is that of Large ribosomal subunit protein uL2 from Borreliella burgdorferi (strain ATCC 35210 / DSM 4680 / CIP 102532 / B31) (Borrelia burgdorferi).